The primary structure comprises 70 residues: Large ribosomal subunit protein eL43 (70 aa).

Zn(2+) is bound by residues cysteine 36, cysteine 39, cysteine 55, and cysteine 58. Residues 36–58 (CPVCKTTGKVVRIASGVWYCKKC) form a C4-type zinc finger.

The protein belongs to the eukaryotic ribosomal protein eL43 family. Putative zinc-binding subfamily. Part of the 50S ribosomal subunit. Zn(2+) serves as cofactor.

Binds to the 23S rRNA. The chain is Large ribosomal subunit protein eL43 from Sulfurisphaera tokodaii (strain DSM 16993 / JCM 10545 / NBRC 100140 / 7) (Sulfolobus tokodaii).